We begin with the raw amino-acid sequence, 218 residues long: Glutathione S-transferase Mu 3 (218 aa).

Residues 2 to 88 form the GST N-terminal domain; sequence PMTLGYWNTR…YLGRKHNLCG (87 aa). Glutathione contacts are provided by residues 7-8, 46-50, and 59-60; these read YW, WLSEK, and NL. Lys-50 participates in a covalent cross-link: Glycyl lysine isopeptide (Lys-Gly) (interchain with G-Cter in SUMO2). Lys-69 participates in a covalent cross-link: Glycyl lysine isopeptide (Lys-Gly) (interchain with G-Cter in SUMO2). Glutathione is bound at residue 72–73; that stretch reads QS. The GST C-terminal domain occupies 90–208; that stretch reads TEEERIRVDT…KSSRFLPRPV (119 aa).

The protein belongs to the GST superfamily. Mu family. As to quaternary structure, homodimer.

The protein localises to the cytoplasm. It carries out the reaction RX + glutathione = an S-substituted glutathione + a halide anion + H(+). Functionally, conjugation of reduced glutathione to a wide number of exogenous and endogenous hydrophobic electrophiles. The sequence is that of Glutathione S-transferase Mu 3 (Gstm3) from Mus musculus (Mouse).